We begin with the raw amino-acid sequence, 819 residues long: Serine/threonine-protein phosphatase 1 regulatory subunit 10 (819 aa).

The TFIIS N-terminal domain occupies 73 to 147 (KLLNNWLTYA…NDWMAVIRSQ (75 aa)). Disordered regions lie at residues 151-204 (QPAD…KFRS), 296-391 (KIKK…RKTV), and 495-785 (SVPD…GGDM). Basic and acidic residues-rich tracts occupy residues 153–165 (ADKE…EDAK) and 173–190 (KTSE…EKPK). Over residues 305 to 327 (SPTSNKASPFDSKSPTEASSLTK) the composition is skewed to polar residues. The short motif at 386–415 (KKRKTVSWPEESRLREYFYFELDETERVNV) is the PP1-binding motif element. The span at 495–504 (SVPDTPHEPD) shows a compositional bias: basic and acidic residues. 2 stretches are compositionally biased toward polar residues: residues 533–543 (MDQSTESQSPD) and 560–578 (MGSS…QEIL). The span at 589-604 (KPEDLMKQPDFSEKIK) shows a compositional bias: basic and acidic residues. Residues 606–618 (LLGSLQNQNQNQG) are compositionally biased toward low complexity. Pro residues-rich tracts occupy residues 635-663 (FPPP…PGPN) and 670-695 (HGPP…PPPN). Basic and acidic residues-rich tracts occupy residues 704 to 715 (HGGERGGMRGGD) and 758 to 777 (HGDH…GDHR). The C3H1-type zinc finger occupies 785 to 813 (MSTRPTCRHFMMKGNCRYENNCAFYHPGI).

As to quaternary structure, component of the PNUTS-PP1 complex (also named PTW/PP1 complex).

The protein resides in the nucleus. It localises to the chromosome. Substrate-recognition component of the PNUTS-PP1 protein phosphatase complex, a protein phosphatase 1 (PP1) complex that promotes RNA polymerase II transcription pause-release, allowing transcription elongation. Promoter-proximal pausing by RNA polymerase II is a transcription halt following transcription initiation but prior to elongation, which acts as a checkpoint to control that transcripts are favorably configured for transcriptional elongation. The PNUTS-PP1 complex mediates the release of RNA polymerase II from promoter-proximal region of genes by catalyzing dephosphorylation of proteins involved in transcription. In some context, PPP1R10/PNUTS also acts as an inhibitor of protein phosphatase 1 (PP1) activity by preventing access to substrates. The protein is Serine/threonine-protein phosphatase 1 regulatory subunit 10 (ppp1r10) of Xenopus laevis (African clawed frog).